A 122-amino-acid chain; its full sequence is Autophagy-related protein 8e (122 aa).

A lipid anchor (Phosphatidylethanolamine amidated glycine) is attached at Gly-118. Positions 119 to 122 (ASSI) are cleaved as a propeptide — removed in mature form.

It belongs to the ATG8 family. In terms of assembly, interacts with ATG4. Interacts with SH3P2. Interacts with ATG1A and ATG11. Binds to ATG1A and ATG11 on autophagic vesicles. Post-translationally, the C-terminal 4 residues are removed by ATG4 to expose Gly-118 at the C-terminus. This Gly-118 forms then a thioester bond with the 'Cys-558' of ATG7 (E1-like activating enzyme) before being transferred to the 'Cys-258' of ATG3 (the specific E2 conjugating enzyme), in order to be finally amidated with phosphatidylethanolamine. This lipid modification anchors ATG8 to autophagosomes. In terms of tissue distribution, constitutively expressed.

It is found in the cytoplasmic vesicle. It localises to the autophagosome membrane. The protein resides in the vacuole membrane. Its subcellular location is the cytoplasm. The protein localises to the cytoskeleton. Its function is as follows. Ubiquitin-like modifier involved in autophagosomes formation. May mediate the delivery of the autophagosomes to the vacuole via the microtubule cytoskeleton. This Arabidopsis thaliana (Mouse-ear cress) protein is Autophagy-related protein 8e (ATG8E).